Reading from the N-terminus, the 256-residue chain is Triosephosphate isomerase (256 aa).

Asn-12 to Lys-14 is a binding site for substrate. Residue His-99 is the Electrophile of the active site. Glu-169 (proton acceptor) is an active-site residue. Residues Gly-175, Ser-214, and Gly-235–Gly-236 contribute to the substrate site.

Belongs to the triosephosphate isomerase family. As to quaternary structure, homodimer.

It localises to the cytoplasm. It carries out the reaction D-glyceraldehyde 3-phosphate = dihydroxyacetone phosphate. Its pathway is carbohydrate biosynthesis; gluconeogenesis. It participates in carbohydrate degradation; glycolysis; D-glyceraldehyde 3-phosphate from glycerone phosphate: step 1/1. Its function is as follows. Involved in the gluconeogenesis. Catalyzes stereospecifically the conversion of dihydroxyacetone phosphate (DHAP) to D-glyceraldehyde-3-phosphate (G3P). This chain is Triosephosphate isomerase, found in Mesorhizobium japonicum (strain LMG 29417 / CECT 9101 / MAFF 303099) (Mesorhizobium loti (strain MAFF 303099)).